A 266-amino-acid polypeptide reads, in one-letter code: Potassium/proton antiporter CemA (266 aa).

The next 3 helical transmembrane spans lie at 46–66 (VIVSVRCLITLIFVPLFINIL), 151–171 (FLSFLSLSVVFLLLKPQIIIL), and 226–246 (FMSLFVATFPVFLDTVFKYWI).

This sequence belongs to the CemA family.

It localises to the plastid. The protein resides in the chloroplast inner membrane. It carries out the reaction K(+)(in) + H(+)(out) = K(+)(out) + H(+)(in). Its function is as follows. Contributes to K(+)/H(+) antiport activity by supporting proton efflux to control proton extrusion and homeostasis in chloroplasts in a light-dependent manner to modulate photosynthesis. Prevents excessive induction of non-photochemical quenching (NPQ) under continuous-light conditions. Indirectly promotes efficient inorganic carbon uptake into chloroplasts. This chain is Potassium/proton antiporter CemA, found in Chlorella vulgaris (Green alga).